Here is a 237-residue protein sequence, read N- to C-terminus: MGNSVMEKIKGGLVVSCQALEDEPLHSAFIMSKMALAAVQGGAVGIRANTAKDIRAIQSEIDVPIIGIYKKDYDDSDVFITPTLKEVREICETGVEIVAMDATTRKRPHNEDLKDILSAIRKEFPNTLFMADTASIEDVYYADSLGFDLIGTTLYGYTEETANKNISDDDFSHLKEVLKSTKRPVIAEGKIDSPSKARQVLTLGCYAVVVGGAVTRPQEITTRFTNEIQKIQEERGK.

Belongs to the NanE family.

It catalyses the reaction an N-acyl-D-glucosamine 6-phosphate = an N-acyl-D-mannosamine 6-phosphate. Its pathway is amino-sugar metabolism; N-acetylneuraminate degradation; D-fructose 6-phosphate from N-acetylneuraminate: step 3/5. Functionally, converts N-acetylmannosamine-6-phosphate (ManNAc-6-P) to N-acetylglucosamine-6-phosphate (GlcNAc-6-P). The polypeptide is Putative N-acetylmannosamine-6-phosphate 2-epimerase (Listeria monocytogenes serovar 1/2a (strain ATCC BAA-679 / EGD-e)).